Reading from the N-terminus, the 860-residue chain is GPI ethanolamine phosphate transferase 2 (860 aa).

2 N-linked (GlcNAc...) asparagine glycosylation sites follow: asparagine 123 and asparagine 180. The next 8 helical transmembrane spans lie at 408-428, 438-458, 459-479, 487-506, 524-544, 555-575, 576-596, and 639-659; these read LGGIGLGLLSTILALTVFSAL, LYLIILLVYFISVFGSSTVEE, EHQIWYWITSGWMAFLYISGS, FNWMFVQVFVRMMISWNQTG, NHPVLWILILVTYGVAFNKVW, LAFLLTLITTFASVGFKITQA, WEAGEVVPAPLLYLMGLPGTL, and AFLTLFLITQSRIQNIPLFMV. The N-linked (GlcNAc...) asparagine glycan is linked to asparagine 672. 4 helical membrane passes run 692-712, 736-756, 795-815, and 834-854; these read LVLVLSVSTLLLEQVSFFSMG, FVGVLTFVSNWIGPLYWSTAG, VYVVLAFSSVAISAVMITCFF, and FVWTVLQFALVDVILSSIFVV.

It belongs to the PIGG/PIGN/PIGO family. PIGG subfamily.

The protein resides in the endoplasmic reticulum membrane. It functions in the pathway glycolipid biosynthesis; glycosylphosphatidylinositol-anchor biosynthesis. Functionally, ethanolamine phosphate transferase involved in glycosylphosphatidylinositol-anchor biosynthesis. Transfers ethanolamine phosphate to the GPI second mannose. In Yarrowia lipolytica (strain CLIB 122 / E 150) (Yeast), this protein is GPI ethanolamine phosphate transferase 2 (LAS21).